We begin with the raw amino-acid sequence, 354 residues long: FAD synthetase 1, chloroplastic (354 aa).

Residues 1–75 (MLCGGSRASV…SQGDDHPELS (75 aa)) constitute a chloroplast transit peptide. The interval 228–248 (SVNTEEEDSKSKERGQVSSTR) is disordered.

Mg(2+) serves as cofactor.

It is found in the plastid. Its subcellular location is the chloroplast. It carries out the reaction FMN + ATP + H(+) = FAD + diphosphate. The protein operates within cofactor biosynthesis; FAD biosynthesis; FAD from FMN: step 1/1. Functionally, catalyzes the adenylation of flavin mononucleotide (FMN) to form flavin adenine dinucleotide (FAD) coenzyme. This Arabidopsis thaliana (Mouse-ear cress) protein is FAD synthetase 1, chloroplastic.